The primary structure comprises 419 residues: L-rhamnose isomerase (419 aa).

Residues His262, Asp294, and Asp296 each contribute to the Mn(2+) site.

It belongs to the rhamnose isomerase family. Homotetramer. The cofactor is Mn(2+).

The protein localises to the cytoplasm. It catalyses the reaction L-rhamnopyranose = L-rhamnulose. Its pathway is carbohydrate degradation; L-rhamnose degradation; glycerone phosphate from L-rhamnose: step 1/3. Catalyzes the interconversion of L-rhamnose and L-rhamnulose. In Salmonella typhi, this protein is L-rhamnose isomerase.